The following is an 882-amino-acid chain: Alanine--tRNA ligase (882 aa).

Zn(2+) contacts are provided by His-570, His-574, Cys-672, and His-676.

This sequence belongs to the class-II aminoacyl-tRNA synthetase family. Zn(2+) serves as cofactor.

Its subcellular location is the cytoplasm. It carries out the reaction tRNA(Ala) + L-alanine + ATP = L-alanyl-tRNA(Ala) + AMP + diphosphate. Catalyzes the attachment of alanine to tRNA(Ala) in a two-step reaction: alanine is first activated by ATP to form Ala-AMP and then transferred to the acceptor end of tRNA(Ala). Also edits incorrectly charged Ser-tRNA(Ala) and Gly-tRNA(Ala) via its editing domain. This Xanthomonas euvesicatoria pv. vesicatoria (strain 85-10) (Xanthomonas campestris pv. vesicatoria) protein is Alanine--tRNA ligase.